The following is a 211-amino-acid chain: Histidine biosynthesis bifunctional protein HisIE (211 aa).

The phosphoribosyl-AMP cyclohydrolase stretch occupies residues 1–107 (MNKLIDFSKG…FNSEIESRFK (107 aa)). Residues 108–211 (IQALAQTIHQ…KGERKKVQEW (104 aa)) form a phosphoribosyl-ATP pyrophosphohydrolase region.

In the N-terminal section; belongs to the PRA-CH family. This sequence in the C-terminal section; belongs to the PRA-PH family.

Its subcellular location is the cytoplasm. It catalyses the reaction 1-(5-phospho-beta-D-ribosyl)-ATP + H2O = 1-(5-phospho-beta-D-ribosyl)-5'-AMP + diphosphate + H(+). The catalysed reaction is 1-(5-phospho-beta-D-ribosyl)-5'-AMP + H2O = 1-(5-phospho-beta-D-ribosyl)-5-[(5-phospho-beta-D-ribosylamino)methylideneamino]imidazole-4-carboxamide. Its pathway is amino-acid biosynthesis; L-histidine biosynthesis; L-histidine from 5-phospho-alpha-D-ribose 1-diphosphate: step 2/9. It participates in amino-acid biosynthesis; L-histidine biosynthesis; L-histidine from 5-phospho-alpha-D-ribose 1-diphosphate: step 3/9. The chain is Histidine biosynthesis bifunctional protein HisIE from Staphylococcus epidermidis (strain ATCC 12228 / FDA PCI 1200).